Reading from the N-terminus, the 372-residue chain is Gustatory and pheromone receptor 39a, isoform B (372 aa).

Topologically, residues 1–32 (MGTRNRKLLFFLHYQRYLGLTNLDFSKSLHIY) are cytoplasmic. A helical membrane pass occupies residues 33 to 53 (WLHGTWSSTAIQIVVVGVFMA). Residues 54 to 59 (ALLGAL) lie on the Extracellular side of the membrane. Residues 60–80 (AESLYYMETKSQTGNTFDNAV) form a helical membrane-spanning segment. The Cytoplasmic portion of the chain corresponds to 81–122 (ILTTSVTQLLANLWLRSQQKSQVNLLQRLSQVVELLQFEPYA). A helical transmembrane segment spans residues 123-143 (VPQFRWLYRIWLLVCLIYGAM). The Extracellular portion of the chain corresponds to 144-147 (VTHF). The helical transmembrane segment at 148 to 168 (GINWLTTMQISRVLTLIGFVY) threads the bilayer. Residues 169-224 (RCVLANFQFTCYTGMVVILKKLLQVQVKQLEHLVSTTTISMAGVAGCLRTHDEILL) lie on the Cytoplasmic side of the membrane. A helical transmembrane segment spans residues 225–245 (LGQRELIAVYGGVILFLFIYQ). At 246–265 (VMQCILIFYISNLEGFHSSN) the chain is on the extracellular side. Residues 266 to 286 (DLVLIFCWLAPMLFYLILPLV) traverse the membrane as a helical segment. Residues 287–348 (VNDIHNQANK…KSTLFKLFTA (62 aa)) lie on the Cytoplasmic side of the membrane. Residues 349–368 (IFTYMVILVQFKEMENSTKS) traverse the membrane as a helical segment. Ile369 is a topological domain (extracellular).

The protein belongs to the insect chemoreceptor superfamily. Gustatory receptor (GR) family. Gr21a subfamily. In terms of tissue distribution, expressed in the adult labellar chemosensory neurons. In larvae, is expressed in neurons of the terminal external chemosensory organ, as well as in the dorsal and posterior pharyngeal sense organs.

Its subcellular location is the cell membrane. Functionally, gustatory receptor which mediates acceptance or avoidance behavior, depending on its substrates. Plays a role in sustaining courtship behavior in males, possibly through the reception of a stimulating arrestant pheromone. The sequence is that of Gustatory and pheromone receptor 39a, isoform B (Gr39a) from Drosophila melanogaster (Fruit fly).